Here is a 225-residue protein sequence, read N- to C-terminus: Cytidylate kinase (225 aa).

11–19 lines the ATP pocket; that stretch reads GPAGAGKGT. The segment covering 169–185 has biased composition (basic and acidic residues); the sequence is MDRIKSRIEERDARDQS. The segment at 169–195 is disordered; sequence MDRIKSRIEERDARDQSRATAPLAAAP.

This sequence belongs to the cytidylate kinase family. Type 1 subfamily.

Its subcellular location is the cytoplasm. It carries out the reaction CMP + ATP = CDP + ADP. The catalysed reaction is dCMP + ATP = dCDP + ADP. In Magnetococcus marinus (strain ATCC BAA-1437 / JCM 17883 / MC-1), this protein is Cytidylate kinase.